Consider the following 230-residue polypeptide: uncharacterized protein (230 aa).

Belongs to the transferase hexapeptide repeat family.

This is an uncharacterized protein from Escherichia coli (strain K12).